We begin with the raw amino-acid sequence, 194 residues long: Fatty acid metabolism regulator protein (194 aa).

The region spanning 5-65 (RPKYMQIIDA…SLFKEKMGQF (61 aa)) is the HTH tetR-type domain. The H-T-H motif DNA-binding region spans 28 to 47 (QVSKIAKQAGVADGTIYLYF).

Homodimer. Binds to DNA.

The protein resides in the cytoplasm. Functionally, transcriptional regulator in fatty acid degradation. Represses transcription of genes required for fatty acid transport and beta-oxidation, including acdA, fadA, fadB, fadE, fadF, fadG, fadH, fadM, fadN, lcfA and lcfB. Binding of FadR to DNA is specifically inhibited by long chain fatty acyl-CoA compounds of 14-20 carbon atoms in length. The sequence is that of Fatty acid metabolism regulator protein (fadR) from Bacillus subtilis (strain 168).